The primary structure comprises 259 residues: Dihydroorotate dehydrogenase B (NAD(+)), electron transfer subunit (259 aa).

One can recognise an FAD-binding FR-type domain in the interval 1–101; sequence MKIEDCTVEE…MGPLGRGYDV (101 aa). FAD contacts are provided by residues 52-55, 69-71, and 76-77; these read RPIS, IYR, and GT. Residues Cys223, Cys228, Cys231, and Cys245 each coordinate [2Fe-2S] cluster.

It belongs to the PyrK family. In terms of assembly, heterotetramer of 2 PyrK and 2 PyrD type B subunits. It depends on [2Fe-2S] cluster as a cofactor. FAD is required as a cofactor.

It participates in pyrimidine metabolism; UMP biosynthesis via de novo pathway; orotate from (S)-dihydroorotate (NAD(+) route): step 1/1. Functionally, responsible for channeling the electrons from the oxidation of dihydroorotate from the FMN redox center in the PyrD type B subunit to the ultimate electron acceptor NAD(+). In Fusobacterium nucleatum subsp. nucleatum (strain ATCC 25586 / DSM 15643 / BCRC 10681 / CIP 101130 / JCM 8532 / KCTC 2640 / LMG 13131 / VPI 4355), this protein is Dihydroorotate dehydrogenase B (NAD(+)), electron transfer subunit.